Reading from the N-terminus, the 359-residue chain is DNA polymerase IV (359 aa).

The 181-residue stretch at 4–184 folds into the UmuC domain; the sequence is IVHVDMDAFY…LKVNRIPGVG (181 aa). Mg(2+) is bound by residues aspartate 8 and aspartate 102. Residue glutamate 103 is part of the active site.

The protein belongs to the DNA polymerase type-Y family. In terms of assembly, monomer. It depends on Mg(2+) as a cofactor.

It localises to the cytoplasm. It carries out the reaction DNA(n) + a 2'-deoxyribonucleoside 5'-triphosphate = DNA(n+1) + diphosphate. Its function is as follows. Poorly processive, error-prone DNA polymerase involved in untargeted mutagenesis. Copies undamaged DNA at stalled replication forks, which arise in vivo from mismatched or misaligned primer ends. These misaligned primers can be extended by PolIV. Exhibits no 3'-5' exonuclease (proofreading) activity. May be involved in translesional synthesis, in conjunction with the beta clamp from PolIII. This is DNA polymerase IV from Xanthomonas oryzae pv. oryzae (strain MAFF 311018).